Here is a 137-residue protein sequence, read N- to C-terminus: Fluoride-specific ion channel FluC 1 (137 aa).

Helical transmembrane passes span 4–24 (LIYIIVGIAGILGALSRYYLG), 37–57 (LATLLINLAGCFLLAWLTTYI), 67–87 (VITGIGTGFIGSFTTFSTFSV), and 100–120 (IAFLYVSCSILGGLIMSGLGY). Positions 77 and 80 each coordinate Na(+).

Belongs to the fluoride channel Fluc/FEX (TC 1.A.43) family.

It is found in the cell membrane. The enzyme catalyses fluoride(in) = fluoride(out). Na(+) is not transported, but it plays an essential structural role and its presence is essential for fluoride channel function. Fluoride-specific ion channel. Important for reducing fluoride concentration in the cell, thus reducing its toxicity. The protein is Fluoride-specific ion channel FluC 1 of Bacillus thuringiensis subsp. konkukian (strain 97-27).